The following is a 392-amino-acid chain: Outer membrane protein assembly factor BamB (392 aa).

Residues 1–19 form the signal peptide; sequence MQLRKLLLPGLLSVTLLSG. Cys-20 carries the N-palmitoyl cysteine lipid modification. The S-diacylglycerol cysteine moiety is linked to residue Cys-20.

Belongs to the BamB family. Part of the Bam complex, which is composed of the outer membrane protein BamA, and four lipoproteins BamB, BamC, BamD and BamE. Monomer. Interacts directly with BamA. The Bam complex has the shape of a hat, with the BamA beta-barrel crown in the outer membrane and the periplasmic brim formed by the BamA POTRA domains and the 4 lipoproteins.

Its subcellular location is the cell outer membrane. Part of the outer membrane protein assembly complex (Bam), which is involved in assembly and insertion of beta-barrel proteins into the outer membrane. Nonessential member of the complex, which may orient the flexible periplasmic domain of BamA for interaction with other Bam components, chaperones and nascent outer membrane proteins. Efficient substrate folding and insertion into the outer membrane requires all 5 subunits. A lateral gate may open between the first and last strands of the BamA beta-barrel that allows substrate to insert into the outer membrane; comparison of the structures of complete and nearly complete Bam complexes show there is considerable movement of all 5 proteins. This is Outer membrane protein assembly factor BamB from Escherichia coli (strain K12).